We begin with the raw amino-acid sequence, 317 residues long: Cell division protein FtsQ (317 aa).

The Cytoplasmic segment spans residues 1 to 63 (MDGGGRFVFA…RIHIPAHTGT (63 aa)). The helical transmembrane segment at 64-82 (ISAVAFYAMIGLYGMSLGG) threads the bilayer. Residues 83–317 (HTNIVTQTTT…KALKKAEKNT (235 aa)) lie on the Periplasmic side of the membrane. The 69-residue stretch at 97–165 (FAVEDVKVSG…KTVEVRLKER (69 aa)) folds into the POTRA domain.

The protein belongs to the FtsQ/DivIB family. FtsQ subfamily.

It is found in the cell inner membrane. In terms of biological role, essential cell division protein. The chain is Cell division protein FtsQ from Agrobacterium fabrum (strain C58 / ATCC 33970) (Agrobacterium tumefaciens (strain C58)).